The primary structure comprises 104 residues: MSSVPASAYLTLAIILFCIGLFGALTKRNTVIVLVCIELMLNAVNLNLVAFSKLGLFPNVTGQIFSLFTMAVAAAEAAVGLAILIALYRNRTTVHVDEMDTLKG.

Transmembrane regions (helical) follow at residues 4–24 (VPAS…LFGA), 31–51 (VIVL…LVAF), and 67–87 (LFTM…LIAL).

This sequence belongs to the complex I subunit 4L family. NDH-1 is composed of 14 different subunits. Subunits NuoA, H, J, K, L, M, N constitute the membrane sector of the complex.

The protein resides in the cell membrane. The enzyme catalyses a quinone + NADH + 5 H(+)(in) = a quinol + NAD(+) + 4 H(+)(out). Functionally, NDH-1 shuttles electrons from NADH, via FMN and iron-sulfur (Fe-S) centers, to quinones in the respiratory chain. The immediate electron acceptor for the enzyme in this species is believed to be a menaquinone. Couples the redox reaction to proton translocation (for every two electrons transferred, four hydrogen ions are translocated across the cytoplasmic membrane), and thus conserves the redox energy in a proton gradient. This Bacillus cereus (strain AH187) protein is NADH-quinone oxidoreductase subunit K.